A 249-amino-acid chain; its full sequence is Aquaporin TIP4-3 (249 aa).

2 consecutive transmembrane segments (helical) span residues 20 to 40 (GVLG…GAAM) and 56 to 76 (TAVA…GFHI). An NPA 1 motif is present at residues 82-84 (NPA). 3 consecutive transmembrane segments (helical) span residues 100-122 (SSLY…RWLT), 141-161 (GVVA…ATIL), and 169-189 (GAGP…GAAL). An NPA 2 motif is present at residues 195–197 (NPA). A helical transmembrane segment spans residues 214 to 234 (VYWVGPLAGGPLAVLVYECCF).

It belongs to the MIP/aquaporin (TC 1.A.8) family. TIP (TC 1.A.8.10) subfamily.

Its subcellular location is the vacuole membrane. Aquaporins facilitate the transport of water and small neutral solutes across cell membranes. This Zea mays (Maize) protein is Aquaporin TIP4-3 (TIP4-3).